The chain runs to 243 residues: MGHKIHPTGLRLGITQEHRSRWYASSKSYPTLLKEDDRIRKFIHKKYGSAGISDVLIARKADQLEVELKTARPGVLVGRQGSGIEELRSGIQKTVGDPNRQVRINVVEVERVDADAFLLAEYIAQQLEKRVAFRRTIRMAVQRAQRAGVLGLKIQVSGRLNGAEIARTEWTREGRVPLHTLRADIDYATKVASTTYGVLGIKVWVFKGEVLGDEAQQQLPVGATPRRRAGRRPQQFEDRSNEG.

The KH type-2 domain maps to 39–110 (IRKFIHKKYG…QVRINVVEVE (72 aa)). A disordered region spans residues 217 to 243 (QQLPVGATPRRRAGRRPQQFEDRSNEG). The span at 234–243 (QQFEDRSNEG) shows a compositional bias: basic and acidic residues.

It belongs to the universal ribosomal protein uS3 family. As to quaternary structure, part of the 30S ribosomal subunit. Forms a tight complex with proteins S10 and S14.

In terms of biological role, binds the lower part of the 30S subunit head. Binds mRNA in the 70S ribosome, positioning it for translation. This chain is Small ribosomal subunit protein uS3, found in Synechococcus sp. (strain WH7803).